The chain runs to 990 residues: Pentatricopeptide repeat-containing protein At4g33170 (990 aa).

PPR repeat units lie at residues 73–107 (ERFL…DLVS), 109–139 (NSIL…LRQD), 144–178 (SRMT…GLDG), 179–209 (DEFV…MPYR), 210–244 (DVVL…GLNP), 279–313 (EIIF…DVEC), 314–348 (DQVT…GLDL), 349–379 (MLTV…MSER), 380–414 (DLIS…GLKP), 415–450 (DQYT…NNVS), 451–477 (DSFV…LFER), 481–515 (DLVA…GERS), 516–550 (DDFT…GYDL), 551–581 (DLWV…IPVP), 582–616 (DDVA…GVLP), 617–651 (DEFT…NCTN), 652–682 (DPFV…IEMM), 683–717 (NITA…GIKP), 718–753 (DKVT…GIKP), and 754–788 (EIEH…ASAS). Positions 789–864 (MYRTLLAACR…DPGFSWIEVK (76 aa)) are type E motif. The type E(+) motif stretch occupies residues 865–895 (NKIHIFVVDDRSNRQTELIYRKVKDMIRDIK). The type DYW motif stretch occupies residues 896–990 (QEGYVPETDF…DGICSCGDYW (95 aa)).

Belongs to the PPR family. PCMP-H subfamily.

This is Pentatricopeptide repeat-containing protein At4g33170 (PCMP-H53) from Arabidopsis thaliana (Mouse-ear cress).